Here is a 147-residue protein sequence, read N- to C-terminus: Globin (147 aa).

Positions 1–147 (GLDGAQKTAL…LLTMLIKAHV (147 aa)) constitute a Globin domain. The heme b site is built by H66 and H98.

This sequence belongs to the globin family. In terms of assembly, homodimer.

The protein resides in the cytoplasm. The polypeptide is Globin (Busycotypus canaliculatus (Channeled whelk)).